Consider the following 480-residue polypeptide: Argininosuccinate lyase (480 aa).

Residues 1–17 (MTDTTPSADLGASSQQP) show a composition bias toward polar residues. Residues 1–24 (MTDTTPSADLGASSQQPAKAWSGR) form a disordered region.

This sequence belongs to the lyase 1 family. Argininosuccinate lyase subfamily.

The protein localises to the cytoplasm. The enzyme catalyses 2-(N(omega)-L-arginino)succinate = fumarate + L-arginine. It functions in the pathway amino-acid biosynthesis; L-arginine biosynthesis; L-arginine from L-ornithine and carbamoyl phosphate: step 3/3. This chain is Argininosuccinate lyase, found in Azoarcus sp. (strain BH72).